Here is a 148-residue protein sequence, read N- to C-terminus: Hemoglobin subunit gamma (148 aa).

A Globin domain is found at 3-148 (HFTAEEKAII…VAIAMGHKYH (146 aa)). 2 residues coordinate heme b: His64 and His93.

Belongs to the globin family. As to quaternary structure, heterotetramer of two alpha chains and two gamma chains in fetal hemoglobin (Hb F). As to expression, red blood cells.

Functionally, gamma chains make up the fetal hemoglobin F, in combination with alpha chains. This chain is Hemoglobin subunit gamma (HBG), found in Carlito syrichta (Philippine tarsier).